The chain runs to 61 residues: Small ribosomal subunit protein uS14 (61 aa).

Zn(2+) is bound by residues Cys24, Cys27, Cys40, and Cys43.

Belongs to the universal ribosomal protein uS14 family. Zinc-binding uS14 subfamily. Part of the 30S ribosomal subunit. Contacts proteins S3 and S10. Zn(2+) is required as a cofactor.

Its function is as follows. Binds 16S rRNA, required for the assembly of 30S particles and may also be responsible for determining the conformation of the 16S rRNA at the A site. This Deinococcus deserti (strain DSM 17065 / CIP 109153 / LMG 22923 / VCD115) protein is Small ribosomal subunit protein uS14.